Reading from the N-terminus, the 536-residue chain is MLKGRIALNILQSQKPIVFSASQQRWQTNVPTAEIRNDPEWLQAKPFEEIPKANILSLFAKSALPGGKYKNLEMMEMIDALRQDYGNIIFLPGMMGRDGLVMTHNPKDFEVVFRNEGVWPFRPGSDILRYHRTVYRKDFFDGVQGIIPSQGKSWGDFRSIVNPVLMQPKNVRLYFKKMSQVNQEFVELIKEIRDASTQEVPGNFLETINRWTLESVSVVALDKQLGLLRESGKNSEATKLFKYLDEFFLHSADLEMKPSLWRYFKTPLLKKMLRTMDSVQEVTLKYVDEAIERLEKEAKEGVVRPEHEQSVLEKLLKVDKKVATVMAMDMLMAGVDTTSSTFTALLLCLAKNPEKQARLREEVMKVLPNKDSEFTEASMKNVPYLRACIKESQRVYPLVIGNARGLTRDSVISGYRVPAGTIVSMIPINSLYSEEYFPKPTEFLPERWLRNASDSAGKCPANDLKTKNPFVFLPFGFGPRMCVGKRIVEMELELGTARLIRNFNVEFNHSTKNAFRSALINLPNIPLKFKFTDVPN.

Heme is bound at residue Cys-482.

This sequence belongs to the cytochrome P450 family. The cofactor is heme.

It is found in the mitochondrion membrane. The chain is Probable cytochrome P450 12a5, mitochondrial (Cyp12a5) from Drosophila melanogaster (Fruit fly).